Here is a 191-residue protein sequence, read N- to C-terminus: Ribonuclease MC (191 aa).

An RNA-binding site is contributed by Q9. Cysteines 15 and 23 form a disulfide. RNA is bound by residues H34, 72-73, R75, F81, 84-85, and 88-89; these read NV, HE, and KH. Catalysis depends on H34, which acts as the Proton donor. Intrachain disulfides connect C48–C92, C152–C185, and C169–C180. E85 is a catalytic residue. The active-site Proton acceptor is H89.

This sequence belongs to the RNase T2 family.

It catalyses the reaction a ribonucleotidyl-ribonucleotide-RNA + H2O = a 3'-end 3'-phospho-ribonucleotide-RNA + a 5'-end dephospho-ribonucleoside-RNA + H(+). Functionally, ribonuclease cleaving preferentially the 5'-side of uridine. In Momordica charantia (Bitter gourd), this protein is Ribonuclease MC.